A 190-amino-acid chain; its full sequence is Threonylcarbamoyl-AMP synthase (190 aa).

A YrdC-like domain is found at 7 to 190 (GDAIAAAIDV…ALTGELFRQG (184 aa)).

The protein belongs to the SUA5 family. TsaC subfamily.

It localises to the cytoplasm. It catalyses the reaction L-threonine + hydrogencarbonate + ATP = L-threonylcarbamoyladenylate + diphosphate + H2O. In terms of biological role, required for the formation of a threonylcarbamoyl group on adenosine at position 37 (t(6)A37) in tRNAs that read codons beginning with adenine. Catalyzes the conversion of L-threonine, HCO(3)(-)/CO(2) and ATP to give threonylcarbamoyl-AMP (TC-AMP) as the acyladenylate intermediate, with the release of diphosphate. This is Threonylcarbamoyl-AMP synthase from Escherichia coli O157:H7.